The chain runs to 170 residues: Cathelicidin antimicrobial peptide (170 aa).

An N-terminal signal peptide occupies residues 1–30; it reads MKTQRDGPSLGRWSLVLLLLGLVMPLAIVA. Residues 31–131 constitute a propeptide, cathelin-like domain (CLD); it reads QVLSYQEAVL…DISCDKDNRR (101 aa). Intrachain disulfides connect cysteine 86–cysteine 97 and cysteine 108–cysteine 125. The active core stretch occupies residues 150-162; sequence LKKIGQKIKDFLG.

Belongs to the cathelicidin family. In terms of assembly, monomer, homodimer or homotrimer (in vitro). Oligomerizes as tetra- or hexamer in solution (in vitro). Proteolytically cleaved by proteinase PRTN3 into antibacterial peptide LL-37. Proteolytically cleaved by cathepsin CTSG and neutrophil elastase ELANE. Post-translationally, resistant to proteolytic degradation in solution, and when bound to both zwitterionic (mimicking mammalian membranes) and negatively charged membranes (mimicking bacterial membranes). In terms of processing, after secretion onto the skin surface, the CAMP gene product is processed by a serine protease-dependent mechanism into multiple novel antimicrobial peptides distinct from and shorter than cathelicidin LL-37. These peptides show enhanced antimicrobial action, acquiring the ability to kill skin pathogens such as S.aureus, E.coli and C.albicans. These peptides have lost the ability to stimulate CXCL8/IL8 release from keratinocytes. The peptides act synergistically, killing bacteria at lower concentrations when present together, and maintain activity at increased salt condition.

It is found in the secreted. Its subcellular location is the vesicle. Antimicrobial protein that is an integral component of the innate immune system. Binds to bacterial lipopolysaccharides (LPS). Acts via neutrophil N-formyl peptide receptors to enhance the release of CXCL2. Postsecretory processing generates multiple cathelicidin antimicrobial peptides with various lengths which act as a topical antimicrobial defense in sweat on skin. The unprocessed precursor form, cathelicidin antimicrobial peptide, inhibits the growth of Gram-negative E.coli and E.aerogenes with efficiencies comparable to that of the mature peptide LL-37 (in vitro). Its function is as follows. Antimicrobial peptide that is an integral component of the innate immune system. Binds to bacterial lipopolysaccharides (LPS). Causes membrane permeabilization by forming transmembrane pores (in vitro). Causes lysis of E.coli. Exhibits antimicrobial activity against Gram-negative bacteria such as P.aeruginosa, S.typhimurium, E.aerogenes, E.coli and P.syringae, Gram-positive bacteria such as L.monocytogenes, S.epidermidis, S.pyogenes and S.aureus, as well as vancomycin-resistant enterococci (in vitro). Exhibits antimicrobial activity against methicillin-resistant S.aureus, P.mirabilis, and C.albicans in low-salt media, but not in media containing 100 mM NaCl (in vitro). Forms chiral supramolecular assemblies with quinolone signal (PQS) molecules of P.aeruginosa, which may lead to interference of bacterial quorum signaling and perturbance of bacterial biofilm formation. May form supramolecular fiber-like assemblies on bacterial membranes. Induces cytokine and chemokine producation as well as TNF/TNFA and CSF2/GMCSF production in normal human keratinocytes. Exhibits hemolytic activity against red blood cells. In terms of biological role, exhibits antimicrobial activity against E.coli and B.megaterium (in vitro). The polypeptide is Cathelicidin antimicrobial peptide (Chlorocebus aethiops (Green monkey)).